The primary structure comprises 156 residues: uncharacterized protein (156 aa).

The 147-residue stretch at 10–156 (VAARTFPLAC…NDYVMVRELV (147 aa)) folds into the N-acetyltransferase domain.

The protein belongs to the acetyltransferase family.

This is an uncharacterized protein from Mycobacterium bovis (strain ATCC BAA-935 / AF2122/97).